The following is a 639-amino-acid chain: Protein phosphatase 2C 35 (639 aa).

Positions Gly-227–Leu-630 constitute a PPM-type phosphatase domain. Mn(2+) is bound by residues Asp-262 and Gly-263. The tract at residues Gln-295–Arg-341 is disordered. The span at Ser-308–Gln-320 shows a compositional bias: polar residues. Residues Arg-323–Pro-332 show a composition bias toward basic residues. Mn(2+) is bound by residues Asp-558 and Asp-621.

It belongs to the PP2C family. In terms of assembly, interacts with XA21 (via juxtamembrane and kinase domains). It depends on Mg(2+) as a cofactor. The cofactor is Mn(2+).

The protein resides in the cell membrane. The enzyme catalyses O-phospho-L-seryl-[protein] + H2O = L-seryl-[protein] + phosphate. It catalyses the reaction O-phospho-L-threonyl-[protein] + H2O = L-threonyl-[protein] + phosphate. Functionally, protein phosphatase that acts on XA21 pathogen recognition receptor. Negatively regulates cell death and XA21-mediated innate immunity. The polypeptide is Protein phosphatase 2C 35 (XB15) (Oryza sativa subsp. japonica (Rice)).